The chain runs to 278 residues: Shikimate dehydrogenase (NADP(+)) (278 aa).

Residues 19–21 (SRS) and Thr66 contribute to the shikimate site. Lys70 functions as the Proton acceptor in the catalytic mechanism. Residues Asn91 and Asp106 each contribute to the shikimate site. Residues 129–133 (GAGGA) and Phe221 contribute to the NADP(+) site. Tyr223 contacts shikimate. Position 242 (Gly242) interacts with NADP(+).

It belongs to the shikimate dehydrogenase family. As to quaternary structure, homodimer.

It carries out the reaction shikimate + NADP(+) = 3-dehydroshikimate + NADPH + H(+). The protein operates within metabolic intermediate biosynthesis; chorismate biosynthesis; chorismate from D-erythrose 4-phosphate and phosphoenolpyruvate: step 4/7. Functionally, involved in the biosynthesis of the chorismate, which leads to the biosynthesis of aromatic amino acids. Catalyzes the reversible NADPH linked reduction of 3-dehydroshikimate (DHSA) to yield shikimate (SA). The chain is Shikimate dehydrogenase (NADP(+)) from Anaeromyxobacter sp. (strain K).